Consider the following 390-residue polypeptide: Putative nickel insertion protein (390 aa).

This sequence belongs to the LarC family.

This is Putative nickel insertion protein from Geotalea uraniireducens (strain Rf4) (Geobacter uraniireducens).